Consider the following 211-residue polypeptide: tRNA (guanine-N(7)-)-methyltransferase (211 aa).

Residues Glu44, Asp69, Asp96, and Asp118 each coordinate S-adenosyl-L-methionine. Asp118 is a catalytic residue. Lys122 contacts substrate. The segment at Arg124–Arg129 is interaction with RNA. Substrate-binding positions include Asp154 and Thr191–Glu194.

Belongs to the class I-like SAM-binding methyltransferase superfamily. TrmB family.

It carries out the reaction guanosine(46) in tRNA + S-adenosyl-L-methionine = N(7)-methylguanosine(46) in tRNA + S-adenosyl-L-homocysteine. It participates in tRNA modification; N(7)-methylguanine-tRNA biosynthesis. In terms of biological role, catalyzes the formation of N(7)-methylguanine at position 46 (m7G46) in tRNA. The sequence is that of tRNA (guanine-N(7)-)-methyltransferase from Streptococcus equi subsp. zooepidemicus (strain H70).